The following is a 377-amino-acid chain: tRNA-specific 2-thiouridylase MnmA (377 aa).

Residues 8-15 (GMSGGVDS) and methionine 34 contribute to the ATP site. The interaction with target base in tRNA stretch occupies residues 94–96 (NPD). The Nucleophile role is filled by cysteine 99. Cysteine 99 and cysteine 201 are oxidised to a cystine. Glycine 123 lines the ATP pocket. Residues 151–153 (KDQ) are interaction with tRNA. Catalysis depends on cysteine 201, which acts as the Cysteine persulfide intermediate. An interaction with tRNA region spans residues 315 to 316 (RY).

The protein belongs to the MnmA/TRMU family.

It is found in the cytoplasm. It carries out the reaction S-sulfanyl-L-cysteinyl-[protein] + uridine(34) in tRNA + AH2 + ATP = 2-thiouridine(34) in tRNA + L-cysteinyl-[protein] + A + AMP + diphosphate + H(+). Catalyzes the 2-thiolation of uridine at the wobble position (U34) of tRNA, leading to the formation of s(2)U34. The protein is tRNA-specific 2-thiouridylase MnmA of Acinetobacter baumannii (strain AB307-0294).